Here is a 414-residue protein sequence, read N- to C-terminus: Zinc metalloproteinase nas-26 (414 aa).

An N-terminal signal peptide occupies residues 1–20 (MTSSLVLILAPLALVAIGEA). Residues 21-61 (AFGNSSKIFEIPGLEVMASDKYPHFTTIETVSRTKVHRHRR) constitute a propeptide that is removed on maturation. Asn24 carries N-linked (GlcNAc...) asparagine glycosylation. The Peptidase M12A domain occupies 62–264 (EVIAGQIYDW…AKVINDIYCP (203 aa)). 6 cysteine pairs are disulfide-bonded: Cys103-Cys263, Cys126-Cys146, Cys267-Cys286, Cys289-Cys300, Cys308-Cys331, and Cys358-Cys378. His154 provides a ligand contact to Zn(2+). Glu155 is an active-site residue. Residues His158 and His164 each contribute to the Zn(2+) site. The EGF-like domain maps to 251–307 (AFLDAKVINDIYCPNACQGRNHLNCLAGGYPDPNNCNVCRCPEGLGGPDCGRLQPSP). The region spanning 308-414 (CGGEIHASDQ…RFSLRFRRQA (107 aa)) is the CUB domain.

Requires Zn(2+) as cofactor.

The protein localises to the secreted. Functionally, metalloprotease. This chain is Zinc metalloproteinase nas-26 (toh-1), found in Caenorhabditis elegans.